Here is a 115-residue protein sequence, read N- to C-terminus: uncharacterized protein (115 aa).

The next 2 helical transmembrane spans lie at 11–31 (FLYL…LVWN) and 85–105 (GYII…YALI).

To M.thermoautotrophicum MTH1706.

The protein localises to the cell membrane. This is an uncharacterized protein from Methanocaldococcus jannaschii (strain ATCC 43067 / DSM 2661 / JAL-1 / JCM 10045 / NBRC 100440) (Methanococcus jannaschii).